A 223-amino-acid polypeptide reads, in one-letter code: Uracil-DNA glycosylase (223 aa).

The active-site Proton acceptor is the D61.

The protein belongs to the uracil-DNA glycosylase (UDG) superfamily. UNG family.

It localises to the cytoplasm. The enzyme catalyses Hydrolyzes single-stranded DNA or mismatched double-stranded DNA and polynucleotides, releasing free uracil.. Its function is as follows. Excises uracil residues from the DNA which can arise as a result of misincorporation of dUMP residues by DNA polymerase or due to deamination of cytosine. The polypeptide is Uracil-DNA glycosylase (Tolumonas auensis (strain DSM 9187 / NBRC 110442 / TA 4)).